Reading from the N-terminus, the 113-residue chain is Defense protein 2 (113 aa).

It belongs to the attacin/sarcotoxin-2 family.

The protein localises to the secreted. Its function is as follows. Has antibacterial activity against both Gram-positive and Gram-negative bacteria. In Lonomia obliqua (Moth), this protein is Defense protein 2.